The primary structure comprises 349 residues: Phenylalanine--tRNA ligase alpha subunit (349 aa).

E262 is a binding site for Mg(2+).

Belongs to the class-II aminoacyl-tRNA synthetase family. Phe-tRNA synthetase alpha subunit type 1 subfamily. Tetramer of two alpha and two beta subunits. Mg(2+) is required as a cofactor.

It localises to the cytoplasm. It catalyses the reaction tRNA(Phe) + L-phenylalanine + ATP = L-phenylalanyl-tRNA(Phe) + AMP + diphosphate + H(+). The polypeptide is Phenylalanine--tRNA ligase alpha subunit (Sorangium cellulosum (strain So ce56) (Polyangium cellulosum (strain So ce56))).